Reading from the N-terminus, the 301-residue chain is Very-long-chain aldehyde decarbonylase GL1-10 (301 aa).

Transmembrane regions (helical) follow at residues 36 to 56, 94 to 114, and 187 to 207; these read VLFWHNILFLFVVFTLAPLPV, FFLVIGPLQLVSYPTVKMVGI, and SFVGPALAPGHMITFWLWIVL. The 135-residue stretch at 131-265 folds into the Fatty acid hydroxylase domain; sequence LVYFLVEDYL…FTYCDYLYGT (135 aa).

Belongs to the sterol desaturase family. Homodimer. As to expression, expressed ubiquitously.

It is found in the endoplasmic reticulum membrane. The enzyme catalyses a long-chain fatty aldehyde + 2 NADPH + O2 + H(+) = a long-chain alkane + formate + 2 NADP(+) + H2O. Functionally, aldehyde decarbonylase involved in the conversion of aldehydes to alkanes. Core component of a very-long-chain alkane synthesis complex. The protein is Very-long-chain aldehyde decarbonylase GL1-10 of Oryza sativa subsp. japonica (Rice).